A 197-amino-acid polypeptide reads, in one-letter code: MIDFDGYRPNVGIVICNRKGQVLWAKRYGQNSWQFPQGGINEGETPEQAMFRELFEEVGLQKKDVRVLYASKLWLRYKLPKRLLRHDSKPMCIGQKQRWFLLQLVCHEKEIDMHRTKSPEFDGWRWVSFWYPVRQVISFKRDVYRRAMKEFAQFLFDPTKNDTALFQHHETKKAETGKKQPYYHKYAPQNKKGRKRR.

One can recognise a Nudix hydrolase domain in the interval glycine 6–lysine 149. Residues glycine 38–glycine 59 carry the Nudix box motif. The disordered stretch occupies residues glutamate 170–arginine 197.

Belongs to the Nudix hydrolase family. RppH subfamily. Requires a divalent metal cation as cofactor.

In terms of biological role, accelerates the degradation of transcripts by removing pyrophosphate from the 5'-end of triphosphorylated RNA, leading to a more labile monophosphorylated state that can stimulate subsequent ribonuclease cleavage. In Actinobacillus succinogenes (strain ATCC 55618 / DSM 22257 / CCUG 43843 / 130Z), this protein is RNA pyrophosphohydrolase.